We begin with the raw amino-acid sequence, 88 residues long: Apolipoprotein C-I (88 aa).

The first 26 residues, 1–26 (MRLFLSLPVWVAVLAMVLEGPAPAQA), serve as a signal peptide directing secretion.

This sequence belongs to the apolipoprotein C1 family.

It localises to the secreted. Its function is as follows. Inhibitor of lipoprotein binding to the low density lipoprotein (LDL) receptor, LDL receptor-related protein, and very low density lipoprotein (VLDL) receptor. Associates with high density lipoproteins (HDL) and the triacylglycerol-rich lipoproteins in the plasma and makes up about 10% of the protein of the VLDL and 2% of that of HDL. Appears to interfere directly with fatty acid uptake and is also the major plasma inhibitor of cholesteryl ester transfer protein (CETP). Binds free fatty acids and reduces their intracellular esterification. Modulates the interaction of APOE with beta-migrating VLDL and inhibits binding of beta-VLDL to the LDL receptor-related protein. The protein is Apolipoprotein C-I (APOC1) of Ursus maritimus (Polar bear).